Reading from the N-terminus, the 412-residue chain is Odorant receptor 47b (412 aa).

Over 1 to 74 the chain is Cytoplasmic; that stretch reads MNDSGYQSNL…NLFIMCNVMT (74 aa). Residues 75–95 form a helical membrane-spanning segment; that stretch reads IFWTMFVALPESKNVIEMGDD. The Extracellular segment spans residues 96-103; the sequence is LVWISGMA. The helical transmembrane segment at 104-124 threads the bilayer; that stretch reads LVFTKIFYMHLRCDEIDELIS. Topologically, residues 125 to 169 are cytoplasmic; that stretch reads DFEYYNRELRPHNIDEEVLGWQRLCYVIESGLYINCFCLVNFFSA. The chain crosses the membrane as a helical span at residues 170-190; it reads AIFLQPLLGEGKLPFHSVYPF. The Extracellular segment spans residues 191-229; it reads QWHRLDLHPYTFWFLYIWQSLTSQHNLMSILMVDMVGIS. The chain crosses the membrane as a helical span at residues 230-250; it reads TFLQTALNLKLLCIEIRKLGD. Topologically, residues 251–302 are cytoplasmic; sequence MEVSDKRFHEEFCRVVRFHQHIIKLVGKANRAFNGAFNAQLMASFSLISIST. A helical membrane pass occupies residues 303 to 323; it reads FETMAAAAVDPKMAAKFVLLM. The Extracellular segment spans residues 324–330; it reads LVAFIQL. A helical membrane pass occupies residues 331–351; it reads SLWCVSGTLVYTQSVEVAQAA. Residues 352–389 are Cytoplasmic-facing; it reads FDINDWHTKSPGIQRDISFVILRAQKPLMYVAEPFLPF. The chain crosses the membrane as a helical span at residues 390–410; that stretch reads TLGTYMLVLKNCYRLLALMQE. Over 411-412 the chain is Extracellular; the sequence is SM.

It belongs to the insect chemoreceptor superfamily. Heteromeric odorant receptor channel (TC 1.A.69) family. Or49a subfamily. As to quaternary structure, interacts with Orco. Complexes exist early in the endomembrane system in olfactory sensory neurons (OSNs), coupling these complexes to the conserved ciliary trafficking pathway. In terms of tissue distribution, expressed in olfactory sensory neurons in the antenna.

The protein resides in the cell membrane. Its function is as follows. Odorant receptor which mediates acceptance or avoidance behavior, depending on its substrates. The odorant receptor repertoire encodes a large collection of odor stimuli that vary widely in identity, intensity, and duration. May form a complex with Orco to form odorant-sensing units, providing sensitive and prolonged odorant signaling and calcium permeability. Plays an important role in sociosexual interactions since its enhances courtship in a pheromone-dependent manner. This is Odorant receptor 47b (Or47b) from Drosophila melanogaster (Fruit fly).